The following is a 209-amino-acid chain: uncharacterized protein (209 aa).

Positions 1–11 (MMRTNAGKETK) are enriched in basic and acidic residues. The tract at residues 1-20 (MMRTNAGKETKGYNPAPADS) is disordered.

This is an uncharacterized protein from Caenorhabditis elegans.